The following is a 323-amino-acid chain: Aldo-keto reductase family 1 member C4 (323 aa).

Residues 20–24 (GFGTY) and D50 contribute to the NADP(+) site. The Proton donor role is filled by Y55. Residue H117 participates in substrate binding. Residues 166–167 (SN), Q190, 216–221 (HSALGT), and 270–280 (KSYNEQRIREN) contribute to the NADP(+) site.

This sequence belongs to the aldo/keto reductase family. Monomer. In terms of processing, the N-terminus is blocked. As to expression, liver specific.

The protein resides in the cytoplasm. Its subcellular location is the cytosol. The enzyme catalyses a 3alpha-hydroxysteroid + NADP(+) = a 3-oxosteroid + NADPH + H(+). It carries out the reaction a 3alpha-hydroxysteroid + NAD(+) = a 3-oxosteroid + NADH + H(+). The catalysed reaction is 5alpha-androstane-3alpha,17beta-diol + NADP(+) = 17beta-hydroxy-5alpha-androstan-3-one + NADPH + H(+). It catalyses the reaction 5alpha-androstane-3beta,17beta-diol + NADP(+) = 17beta-hydroxy-5alpha-androstan-3-one + NADPH + H(+). The enzyme catalyses 5alpha-androstane-3alpha,17beta-diol + NAD(+) = 17beta-hydroxy-5alpha-androstan-3-one + NADH + H(+). It carries out the reaction 17beta-estradiol + NADP(+) = estrone + NADPH + H(+). The catalysed reaction is 17beta-estradiol + NAD(+) = estrone + NADH + H(+). It catalyses the reaction (20S)-hydroxypregn-4-en-3-one + NADP(+) = progesterone + NADPH + H(+). The enzyme catalyses (20S)-hydroxypregn-4-en-3-one + NAD(+) = progesterone + NADH + H(+). It carries out the reaction androsterone + NADP(+) = 5alpha-androstan-3,17-dione + NADPH + H(+). The catalysed reaction is testosterone + NADP(+) = androst-4-ene-3,17-dione + NADPH + H(+). It catalyses the reaction testosterone + NAD(+) = androst-4-ene-3,17-dione + NADH + H(+). The enzyme catalyses 3alpha-hydroxy-5alpha-androstane 17-O-(beta-D-glucuronate) + NADP(+) = 5alpha-dihydrotestosterone 17-O-(beta-D-glucuronate) + NADPH + H(+). It carries out the reaction (3beta,5alpha,17beta)-3-hydroxy-androstan-17-yl sulfate + NADP(+) = 5alpha-dihydrotestosterone sulfate + NADPH + H(+). The catalysed reaction is 5alpha-androstane-3alpha,17beta-diol + NAD(+) = androsterone + NADH + H(+). It catalyses the reaction chlordecone alcohol + NADP(+) = chlordecone + NADPH + H(+). The protein operates within steroid metabolism. Inhibited by nonsteroidal the anti-inflammatory drugs (NSAID) flufenamic. The oxidation reaction is inhibited by low micromolar concentrations of NADPH. Cytosolic aldo-keto reductase that catalyzes the NADH and NADPH-dependent reduction of ketosteroids to hydroxysteroids. Liver specific enzyme that acts as an NAD(P)(H)-dependent 3-, 17- and 20-ketosteroid reductase on the steroid nucleus and side chain. Displays the ability to catalyze both oxidation and reduction in vitro, but most probably acts as a reductase in vivo since the oxidase activity measured in vitro is inhibited by physiological concentration of NADPH. Acts preferentially as a 3-alpha-hydroxysteroid dehydrogenase (HSD) with a subsidiary 3-beta-HSD activity. Catalyzes efficiently the transformation of the potent androgen 5-alpha-dihydrotestosterone (5alpha-DHT or 17beta-hydroxy-5alpha-androstan-3-one) into the less active form, 5-alpha-androstan-3-alpha,17-beta-diol (3-alpha-diol). Catalyzes the reduction of estrone into 17beta-estradiol but with low efficiency. Metabolizes a broad spectrum of natural and synthetic therapeutic steroid and plays an important role in metabolism of androgens, estrogens, progestereone and conjugated steroids. Catalyzes the biotransformation of the pesticide chlordecone (kepone) to its corresponding alcohol leading to increased biliary excretion of the pesticide and concomitant reduction of its neurotoxicity since bile is the major excretory route. This is Aldo-keto reductase family 1 member C4 (AKR1C4) from Homo sapiens (Human).